Consider the following 981-residue polypeptide: NAD(+) hydrolase tir-1 (981 aa).

Disordered regions lie at residues 1 to 31, 74 to 128, and 173 to 225; these read MLPN…RSLK, QNEQ…PTQP, and LSTP…PVDQ. Composition is skewed to polar residues over residues 12–23 and 74–85; these read PSFQSLNNNNQR and QNEQDGETTSTD. The span at 87–97 shows a compositional bias: acidic residues; that stretch reads AFFELDDDDDL. Residues 98-114 are compositionally biased toward low complexity; sequence SSPSVPGSPVDPPSISV. Pro residues predominate over residues 115-128; sequence PLPPKSAPPCPTQP. Over residues 182-200 the composition is skewed to basic and acidic residues; the sequence is EEMHNGQVRKESEYRRFKS. SAM domains follow at residues 614 to 678 and 684 to 750; these read WTCA…LKVA and VDES…AKHP. Residues 760–857 form the TIR domain; that stretch reads KQIDVFISYR…EHQKNIIPIF (98 aa). 769-770 provides a ligand contact to NAD(+); it reads RR. Glutamate 842 is a catalytic residue. 3 stretches are compositionally biased toward polar residues: residues 908-939, 954-963, and 972-981; these read TTPT…TGPS, FTPTGSQERA, and PSASTTSDRN. The segment at 908–981 is disordered; the sequence is TTPTTKEMPS…PSASTTSDRN (74 aa).

This sequence belongs to the SARM1 family. In terms of assembly, homodimer. Interacts with rab-1, pal-1 and unc-43. Highly expressed in hypodermis. Localizes to postsynaptic regions of axons.

It is found in the cytoplasm. It carries out the reaction NAD(+) + H2O = ADP-D-ribose + nicotinamide + H(+). Functionally, NAD(+) hydrolase, which plays a key role in non-apoptotic cell death by regulating NAD(+) metabolism. In response to stress, homooligomerizes and catalyzes cleavage of NAD(+) into ADP-D-ribose (ADPR) and nicotinamide; NAD(+) cleavage promoting non-apoptotic neuronal cell death. In males, involved in non-apoptotic death of the linker cell which guides gonad elongation during larval development. Required for both innate immune response and specification of AWC(OFF) neuron. During late embryogenesis, it acts downstream of CAMKII (unc-43) to regulate specification of asymmetric odorant receptors in AWC(OFF) neuron via the nsy-1/ASK1 pmk-1/p38 MAP kinase signaling cascade. Required to localize nsy-1 to postsynaptic regions of AWC neuron, suggesting that it may act by assembling a signaling complex that regulate odorant receptor expression. Also plays a central role in resistance to infection to a broad range of bacterial and fungi pathogens, possibly by activating pmk-1, independently of the NF-kappa-B pathway. Required for expression of antimicrobial peptides nlp-29 and nlp-31. Its role in immune response and neuron specification may be mediated by the same nsy-1/ASK1 pmk-1/p38 MAP kinase cascade signaling pathway. Involved in the response to anoxic conditions probably by activating the p38 pathway composed of nsy-1/sek-1/pmk-1. Involved in regulation of the serotonergic response of ADF neurons to pathogenic food. In addition, plays a role in the up-regulation of gcs-1 upon arsenite treatment, most likely through activation of pmk-1, to confer protection against toxicity induced by heavy metals. Its function is as follows. Regulates expression of antimicrobial peptide nlp-29 in response to fungal infection or physical injury. In Caenorhabditis elegans, this protein is NAD(+) hydrolase tir-1.